The sequence spans 94 residues: Long neurotoxin LNTX1 (94 aa).

Residues 1–21 (MKILLLTLVVVTIMCLDLGYT) form the signal peptide. Cystine bridges form between C24–C43, C36–C64, C49–C53, C68–C79, and C80–C85.

The protein belongs to the three-finger toxin family. Long-chain subfamily. Type II alpha-neurotoxin sub-subfamily. Monomer. As to expression, expressed by the venom gland.

Its subcellular location is the secreted. In terms of biological role, binds with high affinity to muscular (alpha-1/CHRNA1) and neuronal (alpha-7/CHRNA7) nicotinic acetylcholine receptor (nAChR) and inhibits acetylcholine from binding to the receptor, thereby impairing neuromuscular and neuronal transmission. Recombinant LNTX1 leads to a functional block of the muscle-type acetylcholine receptors. Has a cytotoxic activity. The polypeptide is Long neurotoxin LNTX1 (Ophiophagus hannah (King cobra)).